The primary structure comprises 63 residues: Large ribosomal subunit protein uL29 (63 aa).

This sequence belongs to the universal ribosomal protein uL29 family.

The chain is Large ribosomal subunit protein uL29 from Shewanella pealeana (strain ATCC 700345 / ANG-SQ1).